Consider the following 249-residue polypeptide: Bis(5'-nucleosyl)-tetraphosphatase PrpE [asymmetrical] (249 aa).

The protein belongs to the PrpE family. Requires Ni(2+) as cofactor.

It carries out the reaction P(1),P(4)-bis(5'-guanosyl) tetraphosphate + H2O = GMP + GTP + 2 H(+). Its function is as follows. Asymmetrically hydrolyzes Ap4p to yield AMP and ATP. The sequence is that of Bis(5'-nucleosyl)-tetraphosphatase PrpE [asymmetrical] from Bacillus velezensis (strain DSM 23117 / BGSC 10A6 / LMG 26770 / FZB42) (Bacillus amyloliquefaciens subsp. plantarum).